The following is a 402-amino-acid chain: Flavohemoprotein (402 aa).

In terms of domain architecture, Globin spans 1 to 136; that stretch reads MLSAKTIEIV…IADAFISIEA (136 aa). A heme b-binding site is contributed by histidine 85. Catalysis depends on charge relay system residues tyrosine 95 and glutamate 135. Positions 147 to 402 are reductase; it reads GGWKDFRNFV…EFFGPATSLQ (256 aa). The FAD-binding FR-type domain occupies 150–260; the sequence is KDFRNFVIVK…SAPAGDFVLN (111 aa). Residues tyrosine 188 and 204-207 each bind FAD; that span reads RQYS. Residue 273–278 coordinates NADP(+); it reads GVGITP. 394-397 serves as a coordination point for FAD; sequence FFGP.

Belongs to the globin family. Two-domain flavohemoproteins subfamily. The protein in the C-terminal section; belongs to the flavoprotein pyridine nucleotide cytochrome reductase family. It depends on heme b as a cofactor. Requires FAD as cofactor.

It catalyses the reaction 2 nitric oxide + NADPH + 2 O2 = 2 nitrate + NADP(+) + H(+). The enzyme catalyses 2 nitric oxide + NADH + 2 O2 = 2 nitrate + NAD(+) + H(+). Functionally, is involved in NO detoxification in an aerobic process, termed nitric oxide dioxygenase (NOD) reaction that utilizes O(2) and NAD(P)H to convert NO to nitrate, which protects the bacterium from various noxious nitrogen compounds. Therefore, plays a central role in the inducible response to nitrosative stress. This chain is Flavohemoprotein, found in Bacillus cereus (strain ATCC 14579 / DSM 31 / CCUG 7414 / JCM 2152 / NBRC 15305 / NCIMB 9373 / NCTC 2599 / NRRL B-3711).